A 219-amino-acid polypeptide reads, in one-letter code: UPF0502 protein Swoo_2055 (219 aa).

Positions 167-195 (QVKGESVPISEHSRSQREAPSKRQDEMDE) are disordered. Basic and acidic residues predominate over residues 177 to 191 (EHSRSQREAPSKRQD).

This sequence belongs to the UPF0502 family.

This chain is UPF0502 protein Swoo_2055, found in Shewanella woodyi (strain ATCC 51908 / MS32).